The following is a 380-amino-acid chain: Putative RNA ligase (380 aa).

In terms of biological role, putative RNA ligase. Is able to catalyze the adenylation reaction of ssDNA 3'-terminal phosphate (ssDNA 3'p) to 3'-adenylated DNA (ssDNA 3'pp5'A). This Thermovibrio ammonificans (strain DSM 15698 / JCM 12110 / HB-1) protein is Putative RNA ligase.